We begin with the raw amino-acid sequence, 169 residues long: Ribosome maturation factor RimM (169 aa).

A PRC barrel domain is found at 97–169 (NDEAYFTDLI…KIVVDWEYDY (73 aa)).

Belongs to the RimM family. In terms of assembly, binds ribosomal protein uS19.

The protein resides in the cytoplasm. In terms of biological role, an accessory protein needed during the final step in the assembly of 30S ribosomal subunit, possibly for assembly of the head region. Essential for efficient processing of 16S rRNA. May be needed both before and after RbfA during the maturation of 16S rRNA. It has affinity for free ribosomal 30S subunits but not for 70S ribosomes. This chain is Ribosome maturation factor RimM, found in Francisella philomiragia subsp. philomiragia (strain ATCC 25017 / CCUG 19701 / FSC 153 / O#319-036).